We begin with the raw amino-acid sequence, 750 residues long: MLRFIIFFSLFIHLCVAAPQTPAAAAAVPAKKWLTLNGQEPAVVARGGFSGLFPESSASANDLAIGTSSPGLTMLCNLQMTKDGVGLCLSDIILDNATTISSVFPKAQKTYKVNGQDLKGWFVLDYDADTIFNNVTLVQNIFSRPSIFDGQMSVSAVEDVLGTKPPKFWLSVQYDAFYMEHKLSPAEYLRSLQFRGINVISSPEIGFLKSIGMDAGRAKTKLIFEFKDPEAVEPTTNKKYSEIQQNLAAIKAFASGVLVPKDYIWPIDSAKYLKPATTFVADAHKAGLEVYASGFANDLRTSFNYSYDPSAEYLQFVDNGQFSVDGVITDFPPTASQSITCFSHQNGNLPKAGHALVITHNGASGDYPGCTDLAYQKAVDDGADVIDCSVQMSKDGIAFCHDAADLTASTTAMTIFMSRATSVPEIQPTNGIFSFDLTWAEIQSVKPQIENPFTATGFQRNPANKNAGKFITLADFLDFSKAKAVTGVMINIENAAYLASKKGLGVVDAVKSALAKSTLDKQSTQKVLIQSDDSSVLASFEAVPPYTRVLSIDKEIGGAPKPSVDEIKKYAEAVNLLRTSLVTVSQSFTTGKTNVVEEMHKGNISVYVSVLRNEYISVAFDYFSDPTIELATFISGSGVDGVITEFPATATRYLKSPCSDLNKEQPYAILPAEAGGLVVVADKEAQPPASAPNPPLEAKDVIDPPLPPVANLAASNATGGAQSHPPPASGTVANAANLGLSLLAMLALGV.

Residues 1–17 (MLRFIIFFSLFIHLCVA) form the signal peptide. 2 consecutive GP-PDE domains span residues 41 to 339 (PAVV…SQSI) and 355 to 654 (ALVI…TRYL). N-linked (GlcNAc...) asparagine glycosylation is found at N134, N304, N603, and N716.

This sequence belongs to the glycerophosphoryl diester phosphodiesterase family. As to expression, expressed in flowers and siliques.

The catalysed reaction is a sn-glycero-3-phosphodiester + H2O = an alcohol + sn-glycerol 3-phosphate + H(+). This chain is Glycerophosphodiester phosphodiesterase GDPDL7, found in Arabidopsis thaliana (Mouse-ear cress).